Here is a 1373-residue protein sequence, read N- to C-terminus: DNA-directed RNA polymerase subunit beta (1373 aa).

The protein belongs to the RNA polymerase beta chain family. The RNAP catalytic core consists of 2 alpha, 1 beta, 1 beta' and 1 omega subunit. When a sigma factor is associated with the core the holoenzyme is formed, which can initiate transcription.

It carries out the reaction RNA(n) + a ribonucleoside 5'-triphosphate = RNA(n+1) + diphosphate. DNA-dependent RNA polymerase catalyzes the transcription of DNA into RNA using the four ribonucleoside triphosphates as substrates. The chain is DNA-directed RNA polymerase subunit beta from Rickettsia canadensis (strain McKiel).